A 104-amino-acid chain; its full sequence is Large ribosomal subunit protein uL24 (104 aa).

Belongs to the universal ribosomal protein uL24 family. As to quaternary structure, part of the 50S ribosomal subunit.

In terms of biological role, one of two assembly initiator proteins, it binds directly to the 5'-end of the 23S rRNA, where it nucleates assembly of the 50S subunit. Functionally, one of the proteins that surrounds the polypeptide exit tunnel on the outside of the subunit. In Shewanella woodyi (strain ATCC 51908 / MS32), this protein is Large ribosomal subunit protein uL24.